The sequence spans 156 residues: Small ribosomal subunit protein uS7 (156 aa).

Belongs to the universal ribosomal protein uS7 family. Part of the 30S ribosomal subunit. Contacts proteins S9 and S11.

Functionally, one of the primary rRNA binding proteins, it binds directly to 16S rRNA where it nucleates assembly of the head domain of the 30S subunit. Is located at the subunit interface close to the decoding center, probably blocks exit of the E-site tRNA. The sequence is that of Small ribosomal subunit protein uS7 from Thermobifida fusca (strain YX).